Consider the following 435-residue polypeptide: Xylose isomerase (435 aa).

Mg(2+) contacts are provided by Asp-306 and Asp-308.

The protein belongs to the xylose isomerase family. Homotetramer. Mg(2+) is required as a cofactor.

The protein localises to the cytoplasm. The enzyme catalyses alpha-D-xylose = alpha-D-xylulofuranose. The chain is Xylose isomerase from Allorhizobium ampelinum (strain ATCC BAA-846 / DSM 112012 / S4) (Agrobacterium vitis (strain S4)).